The chain runs to 207 residues: MAQVVADPIVDKSAILKSELSKQPETLIAYAKWYGKVAGPITGVDLSAIDAKSLTLICTLSDGSKQQVRIELSPPLARYEDAKPRLLEMKTRALEGLGLTKTPVITNFIFPSLALKTTIWSVAGLLYLTFVPNPYLTGANIPRAWAAVGLIHGPQAIYTATLARKHVGNLTTGVSYVLGTLVFGFPFWIDLRQRITAARVESVAKIQ.

2 consecutive transmembrane segments (helical) span residues 108–128 and 169–189; these read FIFP…LLYL and NLTT…PFWI.

Its subcellular location is the membrane. It participates in mycotoxin biosynthesis. Its function is as follows. Part of the gene cluster that mediates the biosynthesis of strobilurin A, an antifungal polyketide that contains a key beta-methoxyacrylate toxophore that targets the complex III of the mitochondrial electron transport chain. Strobilurin biosynthesis begins with construction of benzoyl CoA by step-wise elimination of ammonia from phenylalanine by the phenylalanine ammonia-lyase str11, oxygenation by str8 and retro-Claisen reaction to form benzoic acid, which is activated to its CoA thiolester benzoyl CoA by the dedicated CoA ligase str10. Benzoyl CoA forms the starter unit for the highly reducing polyketide synthase stpks1 that produces the polyketide prestrobilutin A. The FAD-dependent oxygenase str9 then catalyzes the key oxidative rearrangement responsible for the creation of the beta-methoxyacrylate toxophore. Str9 performs epoxidation of the 2,3 olefin of prestrobilutin A, followed by Meinwald rearrangement to furnish the aldehyde intermediate. Rapid enolization of the aldehyde intermediate would give the beta-methoxyacrylate skeleton and methylations catalyzed by str2 and str3 complete the synthesis and lead to the production of strobilurin A. The short-chain dehydrogenase stl2 and the dehydrogenase str4 play a role in the shunt pathway leading to the production of bolineol. The cluster encodes no obvious halogenase gene that could be involved in production of strobilurin B, nor any obvious dimethylallyl-transferase that could be involved in the production of strobilurin G. It is possible that unknown proteins encoded in, or near, the cluster (such as str1 or stl1) may form new classes of halogenases or dimethylally-transferases, or that the responsible genes are located elsewhere on the genome. Similarly, proteins encoded by str5/str6 hydrolases appear to have no chemical role in the biosynthesis of strobilurin A. Finally, no obvious self-resistance gene is found within the cluster. In Strobilurus tenacellus, this protein is Strobilurin A biosynthesis cluster protein r1.